Consider the following 265-residue polypeptide: Secreted RxLR effector protein 146 (265 aa).

An N-terminal signal peptide occupies residues 1–25 (MRYYTQVVAASLVATLAVVDSIVFA). Positions 32-50 (RFLRQDGATVTRGGKGEER) match the RxLR-dEER motif. 2 N-linked (GlcNAc...) asparagine glycosylation sites follow: Asn-71 and Asn-148.

The protein belongs to the RxLR effector family.

The protein resides in the secreted. It localises to the host nucleus. It is found in the host cytoplasm. Its function is as follows. Secreted effector that completely suppresses the host cell death induced by cell death-inducing proteins. The sequence is that of Secreted RxLR effector protein 146 from Plasmopara viticola (Downy mildew of grapevine).